The chain runs to 273 residues: Phosphate import ATP-binding protein PstB (273 aa).

The ABC transporter domain maps to 27–268 (VTVRDLNFYY…PSDRRTQDYI (242 aa)). ATP is bound at residue 59–66 (GPSGCGKS).

Belongs to the ABC transporter superfamily. Phosphate importer (TC 3.A.1.7) family. The complex is composed of two ATP-binding proteins (PstB), two transmembrane proteins (PstC and PstA) and a solute-binding protein (PstS).

It is found in the cell inner membrane. It catalyses the reaction phosphate(out) + ATP + H2O = ADP + 2 phosphate(in) + H(+). Its function is as follows. Part of the ABC transporter complex PstSACB involved in phosphate import. Responsible for energy coupling to the transport system. The chain is Phosphate import ATP-binding protein PstB from Rhodopseudomonas palustris (strain ATCC BAA-98 / CGA009).